Reading from the N-terminus, the 85-residue chain is Large ribosomal subunit protein bL31 (85 aa).

Residues lysine 64 to lysine 85 form a disordered region.

This sequence belongs to the bacterial ribosomal protein bL31 family. Type A subfamily. In terms of assembly, part of the 50S ribosomal subunit.

Functionally, binds the 23S rRNA. The protein is Large ribosomal subunit protein bL31 of Acaryochloris marina (strain MBIC 11017).